Reading from the N-terminus, the 204-residue chain is Small ribosomal subunit protein uS4 (204 aa).

Positions Met-1 to Gly-49 are disordered. One can recognise an S4 RNA-binding domain in the interval Gln-94–Ile-154.

Belongs to the universal ribosomal protein uS4 family. Part of the 30S ribosomal subunit. Contacts protein S5. The interaction surface between S4 and S5 is involved in control of translational fidelity.

One of the primary rRNA binding proteins, it binds directly to 16S rRNA where it nucleates assembly of the body of the 30S subunit. Functionally, with S5 and S12 plays an important role in translational accuracy. This Erythrobacter litoralis (strain HTCC2594) protein is Small ribosomal subunit protein uS4.